The sequence spans 115 residues: Large ribosomal subunit protein bL19 (115 aa).

Belongs to the bacterial ribosomal protein bL19 family.

In terms of biological role, this protein is located at the 30S-50S ribosomal subunit interface and may play a role in the structure and function of the aminoacyl-tRNA binding site. In Bacillus licheniformis (strain ATCC 14580 / DSM 13 / JCM 2505 / CCUG 7422 / NBRC 12200 / NCIMB 9375 / NCTC 10341 / NRRL NRS-1264 / Gibson 46), this protein is Large ribosomal subunit protein bL19.